Reading from the N-terminus, the 100-residue chain is NADH-quinone oxidoreductase subunit K (100 aa).

Transmembrane regions (helical) follow at residues M1–G21, I28–A48, and F64–F84.

This sequence belongs to the complex I subunit 4L family. In terms of assembly, NDH-1 is composed of 14 different subunits. Subunits NuoA, H, J, K, L, M, N constitute the membrane sector of the complex.

Its subcellular location is the cell inner membrane. It carries out the reaction a quinone + NADH + 5 H(+)(in) = a quinol + NAD(+) + 4 H(+)(out). Functionally, NDH-1 shuttles electrons from NADH, via FMN and iron-sulfur (Fe-S) centers, to quinones in the respiratory chain. The immediate electron acceptor for the enzyme in this species is believed to be ubiquinone. Couples the redox reaction to proton translocation (for every two electrons transferred, four hydrogen ions are translocated across the cytoplasmic membrane), and thus conserves the redox energy in a proton gradient. The polypeptide is NADH-quinone oxidoreductase subunit K (Helicobacter pylori (strain P12)).